A 417-amino-acid polypeptide reads, in one-letter code: Phosphoglycerate kinase 2 (417 aa).

N-acetylserine is present on serine 2. Serine 2 and serine 4 each carry phosphoserine. Lysine 11 carries the post-translational modification N6-acetyllysine. Valine 23, aspartate 24, phenylalanine 25, asparagine 26, glutamine 38, arginine 39, serine 62, histidine 63, glycine 65, and arginine 66 together coordinate (2R)-3-phosphoglycerate. N6-acetyllysine occurs at positions 75, 86, and 97. (2R)-3-phosphoglycerate contacts are provided by leucine 122 and arginine 123. N6-acetyllysine occurs at positions 131 and 146. Positions 170 and 171 each coordinate (2R)-3-phosphoglycerate. Tyrosine 196 is modified (phosphotyrosine). An N6-acetyllysine modification is found at lysine 199. Glycine 214 contacts ADP. Glycine 214 lines the CDP pocket. AMP is bound by residues alanine 215 and lysine 216. ATP is bound at residue alanine 215. Mg(2+) is bound at residue alanine 215. Residues alanine 218 and aspartate 219 each contribute to the Mg(2+) site. Aspartate 219 is a binding site for CDP. Lysine 220 serves as a coordination point for AMP. Lysine 220 provides a ligand contact to ATP. ADP is bound at residue glycine 238. Glycine 238 contributes to the CDP binding site. Residue glycine 239 participates in AMP binding. Glycine 239 contributes to the ATP binding site. Residues lysine 267 and lysine 291 each carry the N6-acetyllysine modification. Alanine 313 lines the AMP pocket. Alanine 313 is an ATP binding site. The CDP site is built by glycine 338 and phenylalanine 343. Residue phenylalanine 343 coordinates ADP. Residue glutamate 344 participates in AMP binding. ATP is bound by residues glutamate 344, aspartate 375, and threonine 376. Aspartate 375 lines the Mg(2+) pocket.

This sequence belongs to the phosphoglycerate kinase family. Monomer. Mg(2+) is required as a cofactor. Testis specific.

It localises to the cytoplasm. It carries out the reaction (2R)-3-phosphoglycerate + ATP = (2R)-3-phospho-glyceroyl phosphate + ADP. It functions in the pathway carbohydrate degradation; glycolysis; pyruvate from D-glyceraldehyde 3-phosphate: step 2/5. Functionally, essential for sperm motility and male fertility but is not required for the completion of spermatogenesis. The protein is Phosphoglycerate kinase 2 of Sus scrofa (Pig).